Reading from the N-terminus, the 125-residue chain is MORF4 family-associated protein 1 (125 aa).

The disordered stretch occupies residues 76–99 (ESALNHLQGAGGAEPRGPRAEKAD). Residues 94 to 124 (RAEKADEKAQEMAKMAEMLVQLVRRIEKSES) adopt a coiled-coil conformation.

It belongs to the MORF4 family-associated protein family. In terms of assembly, found in a complex composed of MORF4L1, MRFAP1 and RB1. Interacts via its N-terminus with MORF4L1. Interacts with CSTB and MORF4L2.

Its subcellular location is the nucleus. The protein resides in the cytoplasm. The protein localises to the perinuclear region. The polypeptide is MORF4 family-associated protein 1 (Rattus norvegicus (Rat)).